The chain runs to 356 residues: Histidinol-phosphate aminotransferase (356 aa).

Lysine 208 bears the N6-(pyridoxal phosphate)lysine mark.

This sequence belongs to the class-II pyridoxal-phosphate-dependent aminotransferase family. Histidinol-phosphate aminotransferase subfamily. In terms of assembly, homodimer. The cofactor is pyridoxal 5'-phosphate.

It carries out the reaction L-histidinol phosphate + 2-oxoglutarate = 3-(imidazol-4-yl)-2-oxopropyl phosphate + L-glutamate. The protein operates within amino-acid biosynthesis; L-histidine biosynthesis; L-histidine from 5-phospho-alpha-D-ribose 1-diphosphate: step 7/9. This is Histidinol-phosphate aminotransferase from Lactococcus lactis subsp. cremoris (strain MG1363).